The primary structure comprises 243 residues: uncharacterized protein (243 aa).

The protein belongs to the methyltransferase superfamily.

This is an uncharacterized protein from Mycobacterium tuberculosis (strain CDC 1551 / Oshkosh).